A 245-amino-acid polypeptide reads, in one-letter code: 2,3-bisphosphoglycerate-dependent phosphoglycerate mutase (245 aa).

Residues 8–15 (RHGQSLWN), 21–22 (TG), Arg60, 87–90 (ERHY), Lys98, 114–115 (RR), and 183–184 (GN) each bind substrate. The active-site Tele-phosphohistidine intermediate is the His9. Glu87 acts as the Proton donor/acceptor in catalysis.

The protein belongs to the phosphoglycerate mutase family. BPG-dependent PGAM subfamily.

It catalyses the reaction (2R)-2-phosphoglycerate = (2R)-3-phosphoglycerate. It participates in carbohydrate degradation; glycolysis; pyruvate from D-glyceraldehyde 3-phosphate: step 3/5. Catalyzes the interconversion of 2-phosphoglycerate and 3-phosphoglycerate. In Bacillus cereus (strain ATCC 14579 / DSM 31 / CCUG 7414 / JCM 2152 / NBRC 15305 / NCIMB 9373 / NCTC 2599 / NRRL B-3711), this protein is 2,3-bisphosphoglycerate-dependent phosphoglycerate mutase.